Here is a 288-residue protein sequence, read N- to C-terminus: Homoserine kinase (288 aa).

P79–A89 serves as a coordination point for ATP.

Belongs to the GHMP kinase family. Homoserine kinase subfamily.

Its subcellular location is the cytoplasm. It carries out the reaction L-homoserine + ATP = O-phospho-L-homoserine + ADP + H(+). Its pathway is amino-acid biosynthesis; L-threonine biosynthesis; L-threonine from L-aspartate: step 4/5. Catalyzes the ATP-dependent phosphorylation of L-homoserine to L-homoserine phosphate. The polypeptide is Homoserine kinase (Listeria monocytogenes serotype 4b (strain F2365)).